A 481-amino-acid polypeptide reads, in one-letter code: Ribulose bisphosphate carboxylase large chain (481 aa).

Residues 1-2 constitute a propeptide that is removed on maturation; that stretch reads MS. Pro-3 carries the N-acetylproline modification. Lys-14 carries the post-translational modification N6,N6,N6-trimethyllysine. 2 residues coordinate substrate: Asn-123 and Thr-173. The active-site Proton acceptor is the Lys-175. Lys-177 contributes to the substrate binding site. Mg(2+) is bound by residues Lys-201, Asp-203, and Glu-204. The residue at position 201 (Lys-201) is an N6-carboxylysine. The Proton acceptor role is filled by His-294. Positions 295, 327, and 379 each coordinate substrate.

This sequence belongs to the RuBisCO large chain family. Type I subfamily. In terms of assembly, heterohexadecamer of 8 large chains and 8 small chains; disulfide-linked. The disulfide link is formed within the large subunit homodimers. Requires Mg(2+) as cofactor. In terms of processing, the disulfide bond which can form in the large chain dimeric partners within the hexadecamer appears to be associated with oxidative stress and protein turnover.

The protein resides in the plastid. It catalyses the reaction 2 (2R)-3-phosphoglycerate + 2 H(+) = D-ribulose 1,5-bisphosphate + CO2 + H2O. It carries out the reaction D-ribulose 1,5-bisphosphate + O2 = 2-phosphoglycolate + (2R)-3-phosphoglycerate + 2 H(+). Functionally, ruBisCO catalyzes two reactions: the carboxylation of D-ribulose 1,5-bisphosphate, the primary event in carbon dioxide fixation, as well as the oxidative fragmentation of the pentose substrate in the photorespiration process. Both reactions occur simultaneously and in competition at the same active site. The sequence is that of Ribulose bisphosphate carboxylase large chain from Cuscuta sandwichiana (Kauna'oa).